The chain runs to 328 residues: tRNA uridine(34) hydroxylase (328 aa).

Residues 130–224 form the Rhodanese domain; the sequence is LDEDTIVLDT…YGKDPEVQGE (95 aa). The Cysteine persulfide intermediate role is filled by cysteine 184.

It belongs to the TrhO family.

It carries out the reaction uridine(34) in tRNA + AH2 + O2 = 5-hydroxyuridine(34) in tRNA + A + H2O. Catalyzes oxygen-dependent 5-hydroxyuridine (ho5U) modification at position 34 in tRNAs. The polypeptide is tRNA uridine(34) hydroxylase (Streptococcus uberis (strain ATCC BAA-854 / 0140J)).